We begin with the raw amino-acid sequence, 549 residues long: Glutamyl-tRNA(Gln) amidotransferase subunit B, mitochondrial (549 aa).

A mitochondrion-targeting transit peptide spans 1 to 23 (MLRISRDTKIVARVTHVTKSRTY).

The protein belongs to the GatB/GatE family. GatB subfamily. Subunit of the heterotrimeric GatFAB amidotransferase (AdT) complex, composed of A, B and F subunits.

The protein localises to the mitochondrion. It carries out the reaction L-glutamyl-tRNA(Gln) + L-glutamine + ATP + H2O = L-glutaminyl-tRNA(Gln) + L-glutamate + ADP + phosphate + H(+). Allows the formation of correctly charged Gln-tRNA(Gln) through the transamidation of misacylated Glu-tRNA(Gln) in the mitochondria. The reaction takes place in the presence of glutamine and ATP through an activated gamma-phospho-Glu-tRNA(Gln). This Yarrowia lipolytica (strain CLIB 122 / E 150) (Yeast) protein is Glutamyl-tRNA(Gln) amidotransferase subunit B, mitochondrial.